A 320-amino-acid polypeptide reads, in one-letter code: Acetyl-coenzyme A carboxylase carboxyl transferase subunit alpha (320 aa).

The CoA carboxyltransferase C-terminal domain maps to 41–295 (SIEEKAAQAL…GDAIAGALND (255 aa)).

It belongs to the AccA family. In terms of assembly, acetyl-CoA carboxylase is a heterohexamer composed of biotin carboxyl carrier protein (AccB), biotin carboxylase (AccC) and two subunits each of ACCase subunit alpha (AccA) and ACCase subunit beta (AccD).

Its subcellular location is the cytoplasm. It catalyses the reaction N(6)-carboxybiotinyl-L-lysyl-[protein] + acetyl-CoA = N(6)-biotinyl-L-lysyl-[protein] + malonyl-CoA. Its pathway is lipid metabolism; malonyl-CoA biosynthesis; malonyl-CoA from acetyl-CoA: step 1/1. In terms of biological role, component of the acetyl coenzyme A carboxylase (ACC) complex. First, biotin carboxylase catalyzes the carboxylation of biotin on its carrier protein (BCCP) and then the CO(2) group is transferred by the carboxyltransferase to acetyl-CoA to form malonyl-CoA. This is Acetyl-coenzyme A carboxylase carboxyl transferase subunit alpha from Nitrobacter winogradskyi (strain ATCC 25391 / DSM 10237 / CIP 104748 / NCIMB 11846 / Nb-255).